The sequence spans 246 residues: Ubiquinone/menaquinone biosynthesis C-methyltransferase UbiE (246 aa).

S-adenosyl-L-methionine-binding positions include threonine 75, aspartate 95, and 119-120 (DA).

Belongs to the class I-like SAM-binding methyltransferase superfamily. MenG/UbiE family.

The catalysed reaction is a 2-demethylmenaquinol + S-adenosyl-L-methionine = a menaquinol + S-adenosyl-L-homocysteine + H(+). It carries out the reaction a 2-methoxy-6-(all-trans-polyprenyl)benzene-1,4-diol + S-adenosyl-L-methionine = a 5-methoxy-2-methyl-3-(all-trans-polyprenyl)benzene-1,4-diol + S-adenosyl-L-homocysteine + H(+). Its pathway is quinol/quinone metabolism; menaquinone biosynthesis; menaquinol from 1,4-dihydroxy-2-naphthoate: step 2/2. It functions in the pathway cofactor biosynthesis; ubiquinone biosynthesis. Its function is as follows. Methyltransferase required for the conversion of demethylmenaquinol (DMKH2) to menaquinol (MKH2) and the conversion of 2-polyprenyl-6-methoxy-1,4-benzoquinol (DDMQH2) to 2-polyprenyl-3-methyl-6-methoxy-1,4-benzoquinol (DMQH2). The chain is Ubiquinone/menaquinone biosynthesis C-methyltransferase UbiE from Desulfotalea psychrophila (strain LSv54 / DSM 12343).